Reading from the N-terminus, the 1386-residue chain is Rab3 GTPase-activating protein non-catalytic subunit (1386 aa).

The tract at residues glycine 31 to glutamine 69 is disordered. Serine 38 is subject to Phosphoserine. Positions tryptophan 43 to glycine 63 are enriched in acidic residues. Serine 448 carries the post-translational modification Phosphoserine. Threonine 899 carries the phosphothreonine modification. The residue at position 914 (serine 914) is a Phosphoserine. Over residues arginine 959–isoleucine 973 the composition is skewed to basic and acidic residues. Residues arginine 959 to glutamate 982 are disordered. Serine 976 is modified (phosphoserine).

It belongs to the Rab3-GAP regulatory subunit family. The Rab3 GTPase-activating complex is a heterodimer composed of Rab3gap1 and Rab3gap2. The Rab3 GTPase-activating complex interacts with DMXL2. Interacts with LMAN1.

The protein resides in the cytoplasm. Its subcellular location is the endoplasmic reticulum. Functionally, regulatory subunit of the Rab3 GTPase-activating (Rab3GAP) complex composed of RAB3GAP1 and RAB3GAP2, which has GTPase-activating protein (GAP) activity towards various Rab3 subfamily members (RAB3A, RAB3B, RAB3C and RAB3D), RAB5A and RAB43, and guanine nucleotide exchange factor (GEF) activity towards RAB18. As part of the Rab3GAP complex, acts as a GAP for Rab3 proteins by converting active RAB3-GTP to the inactive form RAB3-GDP. Rab3 proteins are involved in regulated exocytosis of neurotransmitters and hormones. The Rab3GAP complex acts as a GEF for RAB18 by promoting the conversion of inactive RAB18-GDP to the active form RAB18-GTP. Recruits and stabilizes RAB18 at the cis-Golgi membrane in fibroblasts where RAB18 is most likely activated. Also involved in RAB18 recruitment at the endoplasmic reticulum (ER) membrane where it maintains proper ER structure. Required for normal eye and brain development. May participate in neurodevelopmental processes such as proliferation, migration and differentiation before synapse formation, and non-synaptic vesicular release of neurotransmitters. This chain is Rab3 GTPase-activating protein non-catalytic subunit, found in Rattus norvegicus (Rat).